A 284-amino-acid polypeptide reads, in one-letter code: 2,3,4,5-tetrahydropyridine-2,6-dicarboxylate N-succinyltransferase (284 aa).

Substrate is bound by residues Arg111 and Asp148.

Belongs to the transferase hexapeptide repeat family. In terms of assembly, homotrimer.

The protein localises to the cytoplasm. It catalyses the reaction (S)-2,3,4,5-tetrahydrodipicolinate + succinyl-CoA + H2O = (S)-2-succinylamino-6-oxoheptanedioate + CoA. It participates in amino-acid biosynthesis; L-lysine biosynthesis via DAP pathway; LL-2,6-diaminopimelate from (S)-tetrahydrodipicolinate (succinylase route): step 1/3. The sequence is that of 2,3,4,5-tetrahydropyridine-2,6-dicarboxylate N-succinyltransferase from Brucella anthropi (strain ATCC 49188 / DSM 6882 / CCUG 24695 / JCM 21032 / LMG 3331 / NBRC 15819 / NCTC 12168 / Alc 37) (Ochrobactrum anthropi).